Consider the following 62-residue polypeptide: Large ribosomal subunit protein bL28 (62 aa).

This sequence belongs to the bacterial ribosomal protein bL28 family.

In Streptococcus mutans serotype c (strain ATCC 700610 / UA159), this protein is Large ribosomal subunit protein bL28.